The chain runs to 363 residues: Phosphoribosylformylglycinamidine cyclo-ligase (363 aa).

This sequence belongs to the AIR synthase family.

Its subcellular location is the cytoplasm. The enzyme catalyses 2-formamido-N(1)-(5-O-phospho-beta-D-ribosyl)acetamidine + ATP = 5-amino-1-(5-phospho-beta-D-ribosyl)imidazole + ADP + phosphate + H(+). It participates in purine metabolism; IMP biosynthesis via de novo pathway; 5-amino-1-(5-phospho-D-ribosyl)imidazole from N(2)-formyl-N(1)-(5-phospho-D-ribosyl)glycinamide: step 2/2. This chain is Phosphoribosylformylglycinamidine cyclo-ligase, found in Brucella anthropi (strain ATCC 49188 / DSM 6882 / CCUG 24695 / JCM 21032 / LMG 3331 / NBRC 15819 / NCTC 12168 / Alc 37) (Ochrobactrum anthropi).